Consider the following 360-residue polypeptide: Chorismate synthase (360 aa).

Residues arginine 48 and arginine 54 each contribute to the NADP(+) site. FMN is bound by residues arginine 125–serine 127, asparagine 246–alanine 247, glycine 286, lysine 301–serine 305, and arginine 327.

This sequence belongs to the chorismate synthase family. As to quaternary structure, homotetramer. It depends on FMNH2 as a cofactor.

The catalysed reaction is 5-O-(1-carboxyvinyl)-3-phosphoshikimate = chorismate + phosphate. It participates in metabolic intermediate biosynthesis; chorismate biosynthesis; chorismate from D-erythrose 4-phosphate and phosphoenolpyruvate: step 7/7. Catalyzes the anti-1,4-elimination of the C-3 phosphate and the C-6 proR hydrogen from 5-enolpyruvylshikimate-3-phosphate (EPSP) to yield chorismate, which is the branch point compound that serves as the starting substrate for the three terminal pathways of aromatic amino acid biosynthesis. This reaction introduces a second double bond into the aromatic ring system. The protein is Chorismate synthase of Actinobacillus pleuropneumoniae serotype 5b (strain L20).